Consider the following 278-residue polypeptide: Sulfide dehydrogenase subunit beta (278 aa).

Residues 1-4 constitute a propeptide that is removed on maturation; that stretch reads MFKI. The FAD-binding FR-type domain occupies 1-95; sequence MFKILRKERL…LGPLGKPSHI (95 aa). Residues Cys-222, Cys-225, and Cys-237 each contribute to the [2Fe-2S] cluster site.

As to quaternary structure, heterodimer of alpha and beta subunits. FAD serves as cofactor. It depends on [2Fe-2S] cluster as a cofactor.

Its subcellular location is the cytoplasm. The enzyme catalyses n sulfur + hydrogen sulfide + NADP(+) = (n+1) sulfur + NADPH. The catalysed reaction is 2 reduced [2Fe-2S]-[ferredoxin] + NADP(+) + H(+) = 2 oxidized [2Fe-2S]-[ferredoxin] + NADPH. Functionally, a bifunctional enzyme that catalyzes the reduction of elemental sulfur or polysulfide to hydrogen sulfide with NADPH as electron donor. Also functions as a reduced ferredoxin:NADP oxidoreductase with a very high affinity for reduced ferredoxin. Exhibits a broad specificity for various physiological and non-physiological substrates with varied reduction potentials such as methyl viologen, benzyl viologen, FAD, FMN, methylene blue, 2,6-dichlorophenolindophenol (DCIP), cytochrome C and ferricyanide with highest preference for benzyl viologen. Does not reduce fumarate, succinate, nitrate, nitrite, sulfate, sulfite or protons. Does not possess any hydrogenase activity or NADPH-dependent glutamate synthase activity. This chain is Sulfide dehydrogenase subunit beta, found in Pyrococcus furiosus (strain ATCC 43587 / DSM 3638 / JCM 8422 / Vc1).